The sequence spans 785 residues: Probable serine protease Ga0098714_109514 (785 aa).

Basic and acidic residues-rich tracts occupy residues 470–481 (LDHGKNGREGGR) and 491–501 (DGPEHPNHYAD). Disordered stretches follow at residues 470–503 (LDHG…ADID) and 608–629 (DGDA…EEVS).

The protein belongs to the peptidase S1 family.

In terms of biological role, probably a dedicated protease for substrate gasdermin bGSDM; cleaves the bGSDM precursor, releasing the pore-forming moiety, which integrates into the membrane and triggers cell death. Involved in defense against bacteriophages. Expression of gasdermin bGSDM and this neighboring protease is toxic in E.coli on solid medium. This Bradyrhizobium tropiciagri protein is Probable serine protease Ga0098714_109514.